Reading from the N-terminus, the 645-residue chain is Translation factor GUF1, mitochondrial (645 aa).

The 185-residue stretch at 44 to 228 (ENYRNFSIVA…AIIDRIPPPT (185 aa)) folds into the tr-type G domain. GTP-binding positions include 53–60 (AHVDHGKS), 120–124 (DTPGH), and 174–177 (NKID).

It belongs to the TRAFAC class translation factor GTPase superfamily. Classic translation factor GTPase family. LepA subfamily.

It is found in the mitochondrion inner membrane. It carries out the reaction GTP + H2O = GDP + phosphate + H(+). In terms of biological role, promotes mitochondrial protein synthesis. May act as a fidelity factor of the translation reaction, by catalyzing a one-codon backward translocation of tRNAs on improperly translocated ribosomes. Binds to mitochondrial ribosomes in a GTP-dependent manner. The chain is Translation factor GUF1, mitochondrial from Saccharomyces cerevisiae (strain ATCC 204508 / S288c) (Baker's yeast).